We begin with the raw amino-acid sequence, 272 residues long: 27-O-demethylrifamycin SV methyltransferase (272 aa).

S-adenosyl-L-methionine contacts are provided by residues Ser89, Gln94, 117–118 (DA), Leu134, and His139.

The protein belongs to the class I-like SAM-binding methyltransferase superfamily. In terms of assembly, exists probably as a trimer.

It carries out the reaction 27-O-demethylrifamycin SV + S-adenosyl-L-methionine = rifamycin SV + S-adenosyl-L-homocysteine + H(+). The protein operates within antibiotic biosynthesis; rifamycin B biosynthesis. Slightly inhibited by Ca(2+) and Mg(2+). Strongly inhibited by Zn(2+), Ni(2+) and Co(2+). Catalyzes the methylation of 27-O-demethylrifamycin SV (DMRSV) to rifamycin SV. The chain is 27-O-demethylrifamycin SV methyltransferase from Amycolatopsis mediterranei (strain S699) (Nocardia mediterranei).